Consider the following 101-residue polypeptide: Phosphoprotein OPG062 (101 aa).

The segment at 51–73 (PSSPACERRPSSPSRCERMNNPR) is disordered. S53 and S62 each carry phosphoserine. Basic and acidic residues predominate over residues 56 to 70 (CERRPSSPSRCERMN).

The protein belongs to the orthopoxvirus OPG062 family. In terms of assembly, self-associates to form high molecular-weight forms. Interacts with protein OPG157/A30. Interacts with host RICTOR and RPTOR; these interactions disrupt the mTORC1 and mTORC2 crosstalk. In terms of processing, phosphorylated on two serines. While these phosphorylations do not play a role in virion assembly; they are essential for the interaction with host RICTOR and RPTOR.

The protein localises to the virion. Its function is as follows. Plays an essential role in virion assembly and morphogenesis. Also plays a role in the inhibition of host immune response by dysregulating mTOR. Sequesters host RICTOR and RPTOR, thereby disrupting mTORC1 and mTORC2 crosstalk. In turn, blocks the host antiviral response in part through mTOR-dependent degradation of cGAS, the primary poxvirus sensor. The polypeptide is Phosphoprotein OPG062 (OPG062) (Vaccinia virus (strain Western Reserve) (VACV)).